We begin with the raw amino-acid sequence, 428 residues long: Histidinol dehydrogenase (428 aa).

Tyr127, Gln185, and Asn208 together coordinate NAD(+). Substrate-binding residues include Ser234, Gln256, and His259. Positions 256 and 259 each coordinate Zn(2+). Residues Glu323 and His324 each act as proton acceptor in the active site. The substrate site is built by His324, Asp357, Glu411, and His416. Asp357 serves as a coordination point for Zn(2+). His416 serves as a coordination point for Zn(2+).

This sequence belongs to the histidinol dehydrogenase family. Requires Zn(2+) as cofactor.

The enzyme catalyses L-histidinol + 2 NAD(+) + H2O = L-histidine + 2 NADH + 3 H(+). The protein operates within amino-acid biosynthesis; L-histidine biosynthesis; L-histidine from 5-phospho-alpha-D-ribose 1-diphosphate: step 9/9. In terms of biological role, catalyzes the sequential NAD-dependent oxidations of L-histidinol to L-histidinaldehyde and then to L-histidine. The polypeptide is Histidinol dehydrogenase (Mannheimia succiniciproducens (strain KCTC 0769BP / MBEL55E)).